The sequence spans 115 residues: Tyrosine-protein phosphatase 19 (115 aa).

Residues 1–115 enclose the Tyrosine-protein phosphatase domain; it reads WLMIVEQKCR…ETGSDAPMVV (115 aa). Asp83 lines the substrate pocket.

The protein belongs to the protein-tyrosine phosphatase family.

It carries out the reaction O-phospho-L-tyrosyl-[protein] + H2O = L-tyrosyl-[protein] + phosphate. In Styela plicata (Wrinkled sea squirt), this protein is Tyrosine-protein phosphatase 19 (STY-19).